The chain runs to 1365 residues: Homeotic protein spalt-major (1365 aa).

Disordered stretches follow at residues 47 to 194, 270 to 298, and 322 to 363; these read SADK…EVTL, QAKQ…EEEE, and LINA…NTHK. 2 stretches are compositionally biased toward low complexity: residues 63 to 76 and 87 to 99; these read SPLT…SPSR and EQST…PEQS. Basic and acidic residues predominate over residues 103-117; that stretch reads HQLENDIKSEAKSEI. Over residues 146 to 157 the composition is skewed to low complexity; it reads PSSPVAEASAEE. The segment covering 159-181 has biased composition (basic and acidic residues); the sequence is ATERTPEKEKEKDVEVDVEKPDE. Residues 275-298 are compositionally biased toward acidic residues; it reads EDTEEDADQEQDQEQETDTYEEEE. Positions 346–363 are enriched in basic and acidic residues; that stretch reads HDHESQPNRRPSLDNTHK. 2 consecutive C2H2-type zinc fingers follow at residues 451-473 and 479-501; these read HRCR…IRSH and FKCN…FQRH. Disordered stretches follow at residues 508 to 554 and 586 to 716; these read VPMN…ASFP and ELPT…TPGQ. Positions 530–539 are enriched in polar residues; that stretch reads MSPTDSSPNH. The span at 540–554 shows a compositional bias: pro residues; it reads SPAPPPLGSAPASFP. Basic and acidic residues-rich tracts occupy residues 603–622 and 638–662; these read PQVK…HEQE and VRIK…EPRR. Phosphoserine is present on residues Ser-739 and Ser-744. The tract at residues 740-772 is disordered; it reads PEHHSPVRSPAGGALPPGVPPPPHHHPHHMARS. 3 consecutive C2H2-type zinc fingers follow at residues 824-846, 852-874, and 884-906; these read NQCV…YRTH, FKCR…MAVH, and HQCP…IRLH. 3 disordered regions span residues 948–1012, 1030–1129, and 1146–1241; these read ALPG…RSGD, VVNT…ILTS, and HHLQ…GARP. Positions 976–991 are enriched in acidic residues; the sequence is DMDDNMDCGEDYDDDV. The segment covering 1040 to 1054 has biased composition (low complexity); sequence SSASSHGHSVGSTSA. Polar residues predominate over residues 1055-1079; sequence PTSPSVHASSQVIKRSSSPARSEAS. 2 positions are modified to phosphoserine: Ser-1076 and Ser-1079. 3 stretches are compositionally biased toward low complexity: residues 1085–1100, 1114–1123, and 1146–1168; these read LTPR…SRSP, RSPSGSSHAS, and HHLQ…AAAA. Over residues 1181–1191 the composition is skewed to basic and acidic residues; that stretch reads QHQEQLRREAA. Over residues 1192–1218 the composition is skewed to low complexity; it reads EAQQKAAAAAAAAAAAAAAQRQTPPQA. 2 consecutive C2H2-type zinc fingers follow at residues 1289 to 1311 and 1317 to 1339; these read TTCG…YRSH and FKCS…MLTH.

The protein belongs to the sal C2H2-type zinc-finger protein family.

The protein resides in the nucleus. In terms of biological role, required for the establishment of the posterior-most head and the anterior-most tail segments of the embryo. Probably function as a transcriptional regulator. Could repress the transcription of the tsh gene. The polypeptide is Homeotic protein spalt-major (salm) (Drosophila melanogaster (Fruit fly)).